We begin with the raw amino-acid sequence, 296 residues long: Urease accessory protein UreD (296 aa).

It belongs to the UreD family. In terms of assembly, ureD, UreF and UreG form a complex that acts as a GTP-hydrolysis-dependent molecular chaperone, activating the urease apoprotein by helping to assemble the nickel containing metallocenter of UreC. The UreE protein probably delivers the nickel.

Its subcellular location is the cytoplasm. Required for maturation of urease via the functional incorporation of the urease nickel metallocenter. This is Urease accessory protein UreD from Janthinobacterium sp. (strain Marseille) (Minibacterium massiliensis).